The sequence spans 100 residues: Urease subunit gamma (100 aa).

It belongs to the urease gamma subunit family. As to quaternary structure, heterotrimer of UreA (gamma), UreB (beta) and UreC (alpha) subunits. Three heterotrimers associate to form the active enzyme.

The protein localises to the cytoplasm. The catalysed reaction is urea + 2 H2O + H(+) = hydrogencarbonate + 2 NH4(+). Its pathway is nitrogen metabolism; urea degradation; CO(2) and NH(3) from urea (urease route): step 1/1. The protein is Urease subunit gamma of Escherichia coli.